The following is a 36-amino-acid chain: Light-harvesting protein B-1015 gamma chain (36 aa).

Its function is as follows. One of the components of the bacteriochlorophyll-protein complex in the chromatophore membrane. The polypeptide is Light-harvesting protein B-1015 gamma chain (Blastochloris viridis (Rhodopseudomonas viridis)).